Here is a 260-residue protein sequence, read N- to C-terminus: Methyl-coenzyme M reductase subunit gamma (260 aa).

Arg-123 lines the coenzyme M pocket.

This sequence belongs to the methyl-coenzyme M reductase gamma subunit family. In terms of assembly, MCR is a hexamer of two alpha, two beta, and two gamma chains, forming a dimer of heterotrimers. It depends on coenzyme F430 as a cofactor.

The protein localises to the cytoplasm. It catalyses the reaction coenzyme B + methyl-coenzyme M = methane + coenzyme M-coenzyme B heterodisulfide. Its pathway is one-carbon metabolism; methyl-coenzyme M reduction; methane from methyl-coenzyme M: step 1/1. In terms of biological role, component of the methyl-coenzyme M reductase (MCR) I that catalyzes the reductive cleavage of methyl-coenzyme M (CoM-S-CH3 or 2-(methylthio)ethanesulfonate) using coenzyme B (CoB or 7-mercaptoheptanoylthreonine phosphate) as reductant which results in the production of methane and the mixed heterodisulfide of CoB and CoM (CoM-S-S-CoB). This is the final step in methanogenesis. This chain is Methyl-coenzyme M reductase subunit gamma (mcrG), found in Methanococcus vannielii.